A 362-amino-acid chain; its full sequence is Photosystem II protein D1 3 (362 aa).

Transmembrane regions (helical) follow at residues 29–46 (YVGWFGVLMIPTLLSATI), 118–133 (HFLIGVFCYLGREWEL), and 142–156 (WICIAYSAPVAAATA). Position 118 (His118) interacts with chlorophyll a. Position 126 (Tyr126) interacts with pheophytin a. Asp170 and Glu189 together coordinate [CaMn4O5] cluster. The chain crosses the membrane as a helical span at residues 197–218 (FHMLGVAGVFGGALISAMHGSL). His198 is a binding site for chlorophyll a. Residues His215 and 264–265 (AF) contribute to the a quinone site. Position 215 (His215) interacts with Fe cation. His274 provides a ligand contact to Fe cation. The helical transmembrane segment at 276–290 (IMAAFPVIGIWFTSL) threads the bilayer. Residues His334, Glu335, Asp344, and Ala346 each coordinate [CaMn4O5] cluster. Residues 347–362 (GTESAPVAVSTAKVGG) constitute a propeptide that is removed on maturation.

It belongs to the reaction center PufL/M/PsbA/D family. As to quaternary structure, PSII is composed of 1 copy each of membrane proteins PsbA, PsbB, PsbC, PsbD, PsbE, PsbF, PsbH, PsbI, PsbJ, PsbK, PsbL, PsbM, PsbT, PsbX, Psb30/Ycf12, peripheral proteins PsbO, CyanoQ (PsbQ), PsbU, PsbV and a large number of cofactors. It forms dimeric complexes. The cofactor is The D1/D2 heterodimer binds P680, chlorophylls that are the primary electron donor of PSII, and subsequent electron acceptors. It shares a non-heme iron and each subunit binds pheophytin, quinone, additional chlorophylls, carotenoids and lipids. D1 provides most of the ligands for the Mn4-Ca-O5 cluster of the oxygen-evolving complex (OEC). There is also a Cl(-1) ion associated with D1 and D2, which is required for oxygen evolution. The PSII complex binds additional chlorophylls, carotenoids and specific lipids.. In terms of processing, tyr-161 forms a radical intermediate that is referred to as redox-active TyrZ, YZ or Y-Z. Post-translationally, C-terminally processed by CtpA; processing is essential to allow assembly of the oxygen-evolving complex and thus photosynthetic growth.

Its subcellular location is the cell inner membrane. The catalysed reaction is 2 a plastoquinone + 4 hnu + 2 H2O = 2 a plastoquinol + O2. In terms of biological role, photosystem II (PSII) is a light-driven water:plastoquinone oxidoreductase that uses light energy to abstract electrons from H(2)O, generating O(2) and a proton gradient subsequently used for ATP formation. It consists of a core antenna complex that captures photons, and an electron transfer chain that converts photonic excitation into a charge separation. The D1/D2 (PsbA/PsbD) reaction center heterodimer binds P680, the primary electron donor of PSII as well as several subsequent electron acceptors. The polypeptide is Photosystem II protein D1 3 (Gloeobacter violaceus (strain ATCC 29082 / PCC 7421)).